The chain runs to 465 residues: Hexokinase-4 (465 aa).

Positions 10–454 (AAKKEKVEQI…SGRGAALVSA (445 aa)) constitute a Hexokinase domain. The segment at 67–203 (EGSEVGDFLS…DFEMDVVAMV (137 aa)) is hexokinase small subdomain. ATP is bound at residue 78–83 (DLGGTN). Residues 151–152 (SF), 168–169 (TK), and 204–205 (ND) contribute to the substrate site. The tract at residues 204-443 (NDTVATMISC…CEITFIESEE (240 aa)) is hexokinase large subdomain. Thr-228 contacts ATP. Substrate-binding residues include Asn-231, Glu-256, and Glu-290. Residues 295–296 (GK), 332–336 (TRFVS), and 411–415 (SVYKL) each bind ATP.

The protein belongs to the hexokinase family. In terms of assembly, monomer. Interacts with MIDN; the interaction occurs preferentially at low glucose levels and results in inhibition of hexokinase activity. Interacts with GCKR; leading to sequestration in the nucleus.

The protein localises to the cytoplasm. Its subcellular location is the nucleus. The protein resides in the mitochondrion. It carries out the reaction a D-hexose + ATP = a D-hexose 6-phosphate + ADP + H(+). The catalysed reaction is D-fructose + ATP = D-fructose 6-phosphate + ADP + H(+). It catalyses the reaction D-glucose + ATP = D-glucose 6-phosphate + ADP + H(+). The enzyme catalyses D-mannose + ATP = D-mannose 6-phosphate + ADP + H(+). Its pathway is carbohydrate metabolism; hexose metabolism. It participates in carbohydrate degradation; glycolysis; D-glyceraldehyde 3-phosphate and glycerone phosphate from D-glucose: step 1/4. Subject to allosteric regulation. Low glucose and high fructose-6-phosphate triggers association with the inhibitor GCKR followed by sequestration in the nucleus. Catalyzes the phosphorylation of hexose, such as D-glucose, D-fructose and D-mannose, to hexose 6-phosphate (D-glucose 6-phosphate, D-fructose 6-phosphate and D-mannose 6-phosphate, respectively). Compared to other hexokinases, has a weak affinity for D-glucose, and is effective only when glucose is abundant. Mainly expressed in pancreatic beta cells and the liver and constitutes a rate-limiting step in glucose metabolism in these tissues. Since insulin secretion parallels glucose metabolism and the low glucose affinity of GCK ensures that it can change its enzymatic activity within the physiological range of glucose concentrations, GCK acts as a glucose sensor in the pancreatic beta cell. In pancreas, plays an important role in modulating insulin secretion. In liver, helps to facilitate the uptake and conversion of glucose by acting as an insulin-sensitive determinant of hepatic glucose usage. Required to provide D-glucose 6-phosphate for the synthesis of glycogen. Mediates the initial step of glycolysis by catalyzing phosphorylation of D-glucose to D-glucose 6-phosphate. The chain is Hexokinase-4 from Homo sapiens (Human).